The primary structure comprises 276 residues: Large ribosomal subunit protein uL2c (276 aa).

The tract at residues 221–276 (RGSVMNPVDHPHGGGEGRAPIGRSRPVTPWGKPALGQKTRKPKKQSNKLILRKRKK) is disordered. The segment covering 258-276 (KTRKPKKQSNKLILRKRKK) has biased composition (basic residues).

This sequence belongs to the universal ribosomal protein uL2 family. Part of the 50S ribosomal subunit.

It localises to the plastid. The protein resides in the chloroplast. This Stigeoclonium helveticum (Green alga) protein is Large ribosomal subunit protein uL2c (rpl2).